Consider the following 404-residue polypeptide: Exodeoxyribonuclease 7 large subunit (404 aa).

Belongs to the XseA family. Heterooligomer composed of large and small subunits.

The protein resides in the cytoplasm. The catalysed reaction is Exonucleolytic cleavage in either 5'- to 3'- or 3'- to 5'-direction to yield nucleoside 5'-phosphates.. Bidirectionally degrades single-stranded DNA into large acid-insoluble oligonucleotides, which are then degraded further into small acid-soluble oligonucleotides. This is Exodeoxyribonuclease 7 large subunit from Mesoplasma florum (strain ATCC 33453 / NBRC 100688 / NCTC 11704 / L1) (Acholeplasma florum).